Here is a 337-residue protein sequence, read N- to C-terminus: Fructose-1,6-bisphosphatase class 1 (337 aa).

Mg(2+) contacts are provided by glutamate 94, aspartate 116, leucine 118, and aspartate 119. Residues 119 to 122, asparagine 210, and lysine 276 each bind substrate; that span reads DGSS. Glutamate 282 provides a ligand contact to Mg(2+).

This sequence belongs to the FBPase class 1 family. In terms of assembly, homotetramer. It depends on Mg(2+) as a cofactor.

It is found in the cytoplasm. It catalyses the reaction beta-D-fructose 1,6-bisphosphate + H2O = beta-D-fructose 6-phosphate + phosphate. It participates in carbohydrate biosynthesis; gluconeogenesis. This chain is Fructose-1,6-bisphosphatase class 1, found in Burkholderia vietnamiensis (strain G4 / LMG 22486) (Burkholderia cepacia (strain R1808)).